A 66-amino-acid chain; its full sequence is DNA-directed RNA polymerase subunit Rpo10 (66 aa).

Cysteine 7, cysteine 10, cysteine 44, and cysteine 45 together coordinate Zn(2+).

This sequence belongs to the archaeal Rpo10/eukaryotic RPB10 RNA polymerase subunit family. As to quaternary structure, part of the 13-subunit RNA polymerase complex. Zn(2+) serves as cofactor.

It is found in the cytoplasm. It catalyses the reaction RNA(n) + a ribonucleoside 5'-triphosphate = RNA(n+1) + diphosphate. DNA-dependent RNA polymerase (RNAP) catalyzes the transcription of DNA into RNA using the four ribonucleoside triphosphates as substrates. This chain is DNA-directed RNA polymerase subunit Rpo10, found in Sulfolobus acidocaldarius (strain ATCC 33909 / DSM 639 / JCM 8929 / NBRC 15157 / NCIMB 11770).